A 734-amino-acid polypeptide reads, in one-letter code: Photosystem I P700 chlorophyll a apoprotein A2 (734 aa).

8 helical membrane-spanning segments follow: residues 46-69, 135-158, 175-199, 273-291, 330-353, 369-395, 417-439, and 517-535; these read IFAS…FHVA, LYTG…LHLQ, LNHH…HVAI, IAHH…GHMY, IHFQ…QHMY, AALY…IFFI, AIIS…LYVH, and FLVH…LILV. Positions 559 and 568 each coordinate [4Fe-4S] cluster. Helical transmembrane passes span 575–596 and 643–665; these read AFYL…YWHW and LSVW…MFLI. 3 residues coordinate chlorophyll a: histidine 654, methionine 662, and tyrosine 670. Tryptophan 671 contributes to the phylloquinone binding site. A helical transmembrane segment spans residues 707 to 727; it reads LVGLAHFSVGYIFTYAAFLIA.

This sequence belongs to the PsaA/PsaB family. The PsaA/B heterodimer binds the P700 chlorophyll special pair and subsequent electron acceptors. PSI consists of a core antenna complex that captures photons, and an electron transfer chain that converts photonic excitation into a charge separation. The eukaryotic PSI reaction center is composed of at least 11 subunits. It depends on P700 is a chlorophyll a/chlorophyll a' dimer, A0 is one or more chlorophyll a, A1 is one or both phylloquinones and FX is a shared 4Fe-4S iron-sulfur center. as a cofactor.

The protein localises to the plastid. It is found in the chloroplast thylakoid membrane. It catalyses the reaction reduced [plastocyanin] + hnu + oxidized [2Fe-2S]-[ferredoxin] = oxidized [plastocyanin] + reduced [2Fe-2S]-[ferredoxin]. PsaA and PsaB bind P700, the primary electron donor of photosystem I (PSI), as well as the electron acceptors A0, A1 and FX. PSI is a plastocyanin-ferredoxin oxidoreductase, converting photonic excitation into a charge separation, which transfers an electron from the donor P700 chlorophyll pair to the spectroscopically characterized acceptors A0, A1, FX, FA and FB in turn. Oxidized P700 is reduced on the lumenal side of the thylakoid membrane by plastocyanin. This Vitis vinifera (Grape) protein is Photosystem I P700 chlorophyll a apoprotein A2.